The chain runs to 430 residues: sn-glycerol-3-phosphate-binding periplasmic protein UgpB (430 aa).

The N-terminal stretch at 1–20 is a signal peptide; it reads MRLISISTTIAFGFAFQAQA. Y62, D86, S141, S268, G302, Y341, and R392 together coordinate sn-glycerol 3-phosphate.

The protein belongs to the bacterial solute-binding protein 1 family. The complex is composed of two ATP-binding proteins (UgpC), two transmembrane proteins (UgpA and UgpE) and a solute-binding protein (UgpB).

The protein resides in the periplasm. Part of the ABC transporter complex UgpBAEC involved in sn-glycerol-3-phosphate (G3P) import. Binds G3P. The chain is sn-glycerol-3-phosphate-binding periplasmic protein UgpB (ugpB) from Rhizobium meliloti (strain 1021) (Ensifer meliloti).